A 780-amino-acid polypeptide reads, in one-letter code: Reticulon-1 (780 aa).

Disordered regions lie at residues 1 to 76 (MAAP…VAME), 128 to 176 (QKEN…AEST), 201 to 223 (RPQE…LDFK), and 293 to 576 (MTAT…IPGP). Residues Ser13 and Ser70 each carry the phosphoserine modification. At Ser327 the chain carries Phosphoserine. Residues 328–341 (PGSVTPPSSGTEPS) show a composition bias toward low complexity. Residues Ser350, Ser352, and Ser487 each carry the phosphoserine modification. Over residues 497–512 (AIREETGSRATEERAP) the composition is skewed to basic and acidic residues. In terms of domain architecture, Reticulon spans 593–780 (AIDLLYWRDI…KIPGAKRHAE (188 aa)). Helical transmembrane passes span 607-627 (IVFG…VVSV) and 709-729 (FAVL…LTLL).

Interacts with NDRG1. Interacts with BACE1. Interacts with TMEM33.

The protein localises to the endoplasmic reticulum membrane. The protein resides in the golgi apparatus membrane. Its function is as follows. Inhibits amyloid precursor protein processing, probably by blocking BACE1 activity. This is Reticulon-1 (Rtn1) from Mus musculus (Mouse).